Here is a 327-residue protein sequence, read N- to C-terminus: Spermidine/putrescine import ATP-binding protein PotA (327 aa).

The 231-residue stretch at 5 to 235 folds into the ABC transporter domain; it reads IKVEAVEKHF…PKTLFVATFI (231 aa). 37–44 is an ATP binding site; sequence GPSGCGKT.

Belongs to the ABC transporter superfamily. Spermidine/putrescine importer (TC 3.A.1.11.1) family. As to quaternary structure, the complex is composed of two ATP-binding proteins (PotA), two transmembrane proteins (PotB and PotC) and a solute-binding protein (PotD).

Its subcellular location is the cell membrane. The enzyme catalyses ATP + H2O + polyamine-[polyamine-binding protein]Side 1 = ADP + phosphate + polyamineSide 2 + [polyamine-binding protein]Side 1.. Functionally, part of the ABC transporter complex PotABCD involved in spermidine/putrescine import. Responsible for energy coupling to the transport system. In Bacillus cereus (strain ATCC 14579 / DSM 31 / CCUG 7414 / JCM 2152 / NBRC 15305 / NCIMB 9373 / NCTC 2599 / NRRL B-3711), this protein is Spermidine/putrescine import ATP-binding protein PotA.